The chain runs to 304 residues: Eukaryotic translation initiation factor 2 subunit alpha (304 aa).

The region spanning 17–88 is the S1 motif domain; that stretch reads DDIVMVNVQQ…EKGYIDLSKR (72 aa). Position 52 is a phosphoserine; by GCN2 (S52). A disordered region spans residues 283-304; it reads LESKELDNRSDSEDDEDESDDE. Over residues 284–293 the composition is skewed to basic and acidic residues; the sequence is ESKELDNRSD. Phosphoserine occurs at positions 292 and 294. Over residues 294–304 the composition is skewed to acidic residues; sequence SEDDEDESDDE.

Belongs to the eIF-2-alpha family. Eukaryotic translation initiation factor 2 eIF2 is a heterotrimeric complex composed of an alpha, a beta and a gamma subunit. The factors eIF-1, eIF-2, eIF-3, TIF5/eIF-5 and methionyl-tRNAi form a multifactor complex (MFC) that may bind to the 40S ribosome. Interacts with CDC123; the interaction is direct. Interacts with GCD1. In terms of processing, phosphorylated; phosphorylation on Ser-52 by the GCN2 protein kinase occurs in response to low amino acid, carbon, or purine availability. Phosphorylation inhibits the guanine nucleotide exchange factor activity of the eIF2B complex.

Its subcellular location is the cytoplasm. It is found in the cytosol. In terms of biological role, eIF-2 functions in the early steps of protein synthesis by forming a ternary complex with GTP and initiator tRNA. This complex binds to a 40S ribosomal subunit, followed by mRNA binding to form a 43S pre-initiation complex. Junction of the 60S ribosomal subunit to form the 80S initiation complex is preceded by hydrolysis of the GTP bound to eIF-2 and release of an eIF-2-GDP binary complex. In order for eIF-2 to recycle and catalyze another round of initiation, the GDP bound to eIF-2 must exchange with GTP by way of a reaction catalyzed by eIF2B. This is Eukaryotic translation initiation factor 2 subunit alpha from Saccharomyces cerevisiae (strain ATCC 204508 / S288c) (Baker's yeast).